A 318-amino-acid polypeptide reads, in one-letter code: MSAILFPGQGVDWKTWMQPYLENNIVQNTLKEAENVTEIEIRKYIVEAEAKSNLRQPITTIAQPAILACSIALLRAFPPFTKKFRFYVGHSLGEYSAFVASQTLSFSSALKLVQARAKAMSYASALCQNPTSMLAITLTSRFPTDNFLNTVYSAVQKYRLIDIANVNSDRQIVLSGDKKELESITSTLSELVRSLGKLRSNWLDVSGAFHSRYMLPARDSLKNALGETEFNISPELCYTDSGKRFLPIISNVTAELYPADEEDIRRQLLLQCFRPVLFKNCLKTVKSKYGANLFYAYGPGTTMQSIAKQNGISTKSRP.

It belongs to the FabD family.

It localises to the mitochondrion. It carries out the reaction holo-[ACP] + malonyl-CoA = malonyl-[ACP] + CoA. The protein operates within lipid metabolism; fatty acid biosynthesis. Its function is as follows. Involved in biosynthesis of fatty acids in mitochondria. The protein is Malonyl CoA-acyl carrier protein transacylase, mitochondrial (mct1) of Schizosaccharomyces pombe (strain 972 / ATCC 24843) (Fission yeast).